A 586-amino-acid chain; its full sequence is Phosphomethylpyrimidine synthase (586 aa).

The segment at 1-58 (MKQSVSAEQIELKSSLPGSKKVYVDGPREGMKVPMREIEQSDTNGVPNPPIRVYDTSG) is disordered. A compositionally biased stretch (basic and acidic residues) spans 22 to 39 (VYVDGPREGMKVPMREIE). Substrate contacts are provided by residues Asn193, Met222, Tyr251, His287, 307–309 (SRG), 348–351 (DGLR), and Glu387. His391 serves as a coordination point for Zn(2+). Tyr414 is a binding site for substrate. His455 is a binding site for Zn(2+). Positions 535, 538, and 543 each coordinate [4Fe-4S] cluster.

It belongs to the ThiC family. [4Fe-4S] cluster serves as cofactor.

The catalysed reaction is 5-amino-1-(5-phospho-beta-D-ribosyl)imidazole + S-adenosyl-L-methionine = 4-amino-2-methyl-5-(phosphooxymethyl)pyrimidine + CO + 5'-deoxyadenosine + formate + L-methionine + 3 H(+). It functions in the pathway cofactor biosynthesis; thiamine diphosphate biosynthesis. Catalyzes the synthesis of the hydroxymethylpyrimidine phosphate (HMP-P) moiety of thiamine from aminoimidazole ribotide (AIR) in a radical S-adenosyl-L-methionine (SAM)-dependent reaction. This Bacillus anthracis (strain A0248) protein is Phosphomethylpyrimidine synthase.